The sequence spans 665 residues: Ribonuclease R 2 (665 aa).

In terms of domain architecture, RNB spans 202-528 (REDYRNEITY…LIIHRLLHLY (327 aa)). Residues 579 to 662 (GEVYTGTITG…RKGTVDFEQI (84 aa)) form the S1 motif domain.

The protein belongs to the RNR ribonuclease family. RNase R subfamily.

It localises to the cytoplasm. The enzyme catalyses Exonucleolytic cleavage in the 3'- to 5'-direction to yield nucleoside 5'-phosphates.. Functionally, 3'-5' exoribonuclease that releases 5'-nucleoside monophosphates and is involved in maturation of structured RNAs. The protein is Ribonuclease R 2 of Lactococcus lactis subsp. lactis (strain IL1403) (Streptococcus lactis).